The sequence spans 420 residues: UDP-N-acetylglucosamine 1-carboxyvinyltransferase (420 aa).

22–23 provides a ligand contact to phosphoenolpyruvate; the sequence is KN. Residue R92 coordinates UDP-N-acetyl-alpha-D-glucosamine. The active-site Proton donor is the C116. A 2-(S-cysteinyl)pyruvic acid O-phosphothioketal modification is found at C116. UDP-N-acetyl-alpha-D-glucosamine contacts are provided by residues 121-125, D304, and I326; that span reads RPVDQ.

It belongs to the EPSP synthase family. MurA subfamily.

It localises to the cytoplasm. The catalysed reaction is phosphoenolpyruvate + UDP-N-acetyl-alpha-D-glucosamine = UDP-N-acetyl-3-O-(1-carboxyvinyl)-alpha-D-glucosamine + phosphate. The protein operates within cell wall biogenesis; peptidoglycan biosynthesis. In terms of biological role, cell wall formation. Adds enolpyruvyl to UDP-N-acetylglucosamine. The protein is UDP-N-acetylglucosamine 1-carboxyvinyltransferase of Paraburkholderia xenovorans (strain LB400).